The primary structure comprises 546 residues: Branchpoint-bridging protein (546 aa).

2 disordered regions span residues 1–141 (MWRP…ASAK) and 178–199 (TGDVVPPEGQRSPSPTPQYDAY). Positions 50-128 (RQERERDARD…DRGDSNEDGP (79 aa)) are enriched in basic and acidic residues. The region spanning 251–330 (YIPVKEFPEI…SKVKTCVALI (80 aa)) is the KH domain. 2 consecutive CCHC-type zinc fingers follow at residues 368–385 (QLCQNCGEKGHRRWECPQ) and 393–410 (VICRICGGAGHMARDCRG).

Belongs to the BBP/SF1 family.

It localises to the nucleus. Functionally, necessary for the splicing of pre-mRNA. Has a role in the recognition of the branch site (5'-UACUAAC-3'), the pyrimidine tract and the 3'-splice site at the 3'-end of introns. This chain is Branchpoint-bridging protein (BBP), found in Cryptococcus neoformans var. neoformans serotype D (strain B-3501A) (Filobasidiella neoformans).